We begin with the raw amino-acid sequence, 195 residues long: Ribosomal RNA small subunit methyltransferase G (195 aa).

S-adenosyl-L-methionine-binding positions include Gly-60, Leu-65, 114–115 (IE), and Arg-128.

This sequence belongs to the methyltransferase superfamily. RNA methyltransferase RsmG family.

It localises to the cytoplasm. It catalyses the reaction guanosine(527) in 16S rRNA + S-adenosyl-L-methionine = N(7)-methylguanosine(527) in 16S rRNA + S-adenosyl-L-homocysteine. Functionally, specifically methylates the N7 position of guanine in position 527 of 16S rRNA. The polypeptide is Ribosomal RNA small subunit methyltransferase G (Dinoroseobacter shibae (strain DSM 16493 / NCIMB 14021 / DFL 12)).